The sequence spans 191 residues: Cytochrome b-245 light chain (191 aa).

The Cytoplasmic segment spans residues 2–7 (GQIEWA). The helical transmembrane segment at 8–30 (MWANEQALASGLILITGGIVATA) threads the bilayer. Topologically, residues 31–35 (GQFTQ) are extracellular. Residues 36–53 (WYLGAYSIAAGVLVCLLE) traverse the membrane as a helical segment. Residues 54-69 (YPRGKRSKGSTMERCG) are Cytoplasmic-facing. The stretch at 70 to 80 (QKYLTRVVKLF) is an intramembrane region. The Cytoplasmic segment spans residues 81–86 (GPLTRN). Residues 87–104 (YYIRAFLHLGLAVPAGFL) traverse the membrane as a helical segment. A topological domain (extracellular) is located at residue Leu-105. The chain crosses the membrane as a helical span at residues 106–126 (ATILGTACLAIASGIYLLAAI). Residues 127 to 191 (RGEQWSPIEP…NPMPVNDEVV (65 aa)) lie on the Cytoplasmic side of the membrane. The disordered stretch occupies residues 134-191 (IEPKPKERPQIGGTIKQPPSNPPPRPPAEARKKPSEEAAGVPTGGPQENPMPVNDEVV). Position 147 is a phosphothreonine (Thr-147). Lys-149 participates in a covalent cross-link: Glycyl lysine isopeptide (Lys-Gly) (interchain with G-Cter in ubiquitin). Ser-168 bears the Phosphoserine mark.

This sequence belongs to the p22phox family. Component of the phagocyte NADPH oxidase core complex/cytochrome b558 complex, composed of CYBB (heavy chain (beta)) and CYBA (light chain (alpha)). Component of the phagocyte NADPH oxidase complex composed of an obligatory core heterodimer formed by the membrane proteins CYBA and CYBB and the cytosolic regulatory subunits NCF1/p47-phox, NCF2/p67-phox, NCF4/p40-phox and the small GTPase RAC1 or RAC2. Interacts with NCF1 (via SH3 domain). Interacts with SH3PXD2A. Interacts with DUOX1, DUOX2 and TPO. Interacts with NOX4; this interaction mediates superoxide generation. Interacts with calprotectin (S100A8/9). Interacts with GBP7. Interacts with NOXO1. Forms a heterodimer with NOX3 and is essential for activity and cell membrane localization of NOX3. Interacts with NOX1. Post-translationally, phosphorylation at Thr-147 enhances NADPH oxidase activity by promoting NCF1/p47-phox binding. Ubiquitinated at Lys-149 likely by RNF145.

The protein resides in the cell membrane. Subunit of NADPH oxidase complexes that is required for the NADPH oxidase activity that generates, in various cell types, superoxide from molecular oxygen utilizing NADPH as an electron donor. Subunit of the phagocyte NADPH oxidase complex that mediates the transfer of electrons from cytosolic NADPH to O2 to produce the superoxide anion (O2(-)). In the activated complex, electrons are first transferred from NADPH to flavin adenine dinucleotide (FAD) and subsequently transferred via two heme molecules to molecular oxygen, producing superoxide through an outer-sphere reaction. Activation of the NADPH oxidase complex is initiated by the assembly of cytosolic subunits of the NADPH oxidase complex with the core NADPH oxidase complex to form a complex at the plasma membrane or phagosomal membrane. This activation process is initiated by phosphorylation dependent binding of the cytosolic NCF1/p47-phox subunit to the C-terminus of CYBA/p22-phox. Aassociates with NOX3 to form a functional NADPH oxidase constitutively generating superoxide. The polypeptide is Cytochrome b-245 light chain (Bos taurus (Bovine)).